The following is a 437-amino-acid chain: GTPase Der (437 aa).

2 consecutive EngA-type G domains span residues 4–167 and 176–351; these read PVIA…PEDE and IRIS…ENHN. Residues 10 to 17, 57 to 61, 119 to 122, 182 to 189, 229 to 233, and 294 to 297 each bind GTP; these read GRPNVGKS, DTGGI, NKID, DTAGM, and NKWD. Positions 352 to 436 constitute a KH-like domain; sequence LRVPTHVLND…PIKIIARKKN (85 aa).

The protein belongs to the TRAFAC class TrmE-Era-EngA-EngB-Septin-like GTPase superfamily. EngA (Der) GTPase family. In terms of assembly, associates with the 50S ribosomal subunit.

GTPase that plays an essential role in the late steps of ribosome biogenesis. This chain is GTPase Der, found in Halalkalibacterium halodurans (strain ATCC BAA-125 / DSM 18197 / FERM 7344 / JCM 9153 / C-125) (Bacillus halodurans).